The following is a 572-amino-acid chain: Sulfite reductase [NADPH] hemoprotein beta-component (572 aa).

The [4Fe-4S] cluster site is built by C436, C442, C481, and C485. Residue C485 participates in siroheme binding.

Belongs to the nitrite and sulfite reductase 4Fe-4S domain family. In terms of assembly, alpha(8)-beta(8). The alpha component is a flavoprotein, the beta component is a hemoprotein. Siroheme serves as cofactor. Requires [4Fe-4S] cluster as cofactor.

It carries out the reaction hydrogen sulfide + 3 NADP(+) + 3 H2O = sulfite + 3 NADPH + 4 H(+). It functions in the pathway sulfur metabolism; hydrogen sulfide biosynthesis; hydrogen sulfide from sulfite (NADPH route): step 1/1. In terms of biological role, component of the sulfite reductase complex that catalyzes the 6-electron reduction of sulfite to sulfide. This is one of several activities required for the biosynthesis of L-cysteine from sulfate. The polypeptide is Sulfite reductase [NADPH] hemoprotein beta-component (Bacillus pumilus (strain SAFR-032)).